The sequence spans 915 residues: Copper-exporting P-type ATPase (915 aa).

HMA domains are found at residues 11 to 72 (NHFA…YQGG) and 73 to 134 (TEQT…YQAI). 4 residues coordinate Cu(+): Cys-22, Cys-25, Cys-84, and Cys-87. The segment at 142–169 (FAPAASIDEKETDTPDAENSSNTEATEA) is disordered. Residues 158–169 (AENSSNTEATEA) show a composition bias toward polar residues. An HMA 3 domain is found at 172-236 (QTLSLLIKGM…AIQSSGYQAE (65 aa)). Residues Cys-183 and Cys-186 each coordinate Cu(+). 7 consecutive transmembrane segments (helical) span residues 265-285 (LGIA…NMMI), 293-313 (VWGG…RHFF), 329-349 (TLVA…VAWP), 359-379 (VYFE…YIET), 474-494 (LVIT…IQMV), 514-534 (VFVP…YLYG), and 541-561 (YMLV…LGLA). Catalysis depends on Asp-598, which acts as the 4-aspartylphosphate intermediate. 2 residues coordinate Mg(2+): Asp-796 and Asp-800. A run of 2 helical transmembrane segments spans residues 801 to 821 (APAL…DVAI) and 865 to 885 (IPIA…PVVA).

It belongs to the cation transport ATPase (P-type) (TC 3.A.3) family. Type IB subfamily.

Its subcellular location is the cell membrane. It catalyses the reaction Cu(+)(in) + ATP + H2O = Cu(+)(out) + ADP + phosphate + H(+). Functionally, involved in copper export. This is Copper-exporting P-type ATPase (copA) from Vibrio cholerae serotype O1 (strain ATCC 39315 / El Tor Inaba N16961).